The following is a 1239-amino-acid chain: Potassium channel subfamily T member 1 (1239 aa).

A disordered region spans residues 1–45; that stretch reads MARAKLPRSPSEGKAGPGDTPAGSAAPEEPHGLSPLLPTRGGGSV. Over 1-93 the chain is Cytoplasmic; the sequence is MARAKLPRSP…LFFIKNQRSS (93 aa). A helical transmembrane segment spans residues 94-126; sequence LRIRLFNFSLKLLTCLLYIVRVLLDNPDQGIGC. The Extracellular segment spans residues 127 to 153; that stretch reads WGCTKYNYTFNGSSSEFHWAPILWVER. N-linked (GlcNAc...) asparagine glycosylation is found at Asn-133 and Asn-137. The chain crosses the membrane as a helical span at residues 154-178; that stretch reads KMALWVIQVIVATISFLETMLLIYL. Residues 179 to 192 lie on the Cytoplasmic side of the membrane; it reads SYKGNIWEQIFHVS. The chain crosses the membrane as a helical span at residues 193-208; that stretch reads FVLEMINTLPFIITVF. Residues 209–215 lie on the Extracellular side of the membrane; it reads WPPLRNL. A helical membrane pass occupies residues 216–233; the sequence is FIPVFLNCWLAKHALENM. The Cytoplasmic portion of the chain corresponds to 234-246; that stretch reads INDFHRAILRTQS. A helical transmembrane segment spans residues 247-274; it reads AMFNQVLILFCTLLCLVFTGTCGIQHLE. The Extracellular portion of the chain corresponds to 275–281; that stretch reads RAGGNLN. Residues 282-302 constitute an intramembrane region (pore-forming); sequence LLTSFYFCIVTFSTVGFGDVT. Val-296 and Gly-297 together coordinate K(+). Residues 303 to 304 lie on the Extracellular side of the membrane; that stretch reads PK. A helical membrane pass occupies residues 305–338; sequence IWPSQLLVVILICVTLVVLPLQFEELVYLWMERQ. Topologically, residues 339–1239 are cytoplasmic; it reads KSGGNYSRHR…NPETRDETQL (901 aa). Residues 352–488 enclose the RCK N-terminal 1 domain; the sequence is EKHVVLCVSS…FHVKFADHVV (137 aa). The Na(+) site is built by Leu-513, His-516, Ser-538, and Asn-540. The segment at 658-689 is disordered; the sequence is QNTDCRPSQGGSGGGGGKLTLPTENGSGSRRP. Zn(2+) contacts are provided by Cys-758 and Cys-759. K(+) is bound by residues Arg-761 and Lys-764. Positions 761 and 764 each coordinate Na(+). Residues Cys-766 and His-768 each coordinate Zn(2+). Residues Asn-769, Tyr-771, Tyr-777, and Gly-778 each contribute to the K(+) site. Na(+) is bound at residue Tyr-771. Phe-779 is a binding site for Na(+). Positions 781–921 constitute an RCK N-terminal 2 domain; it reads NKLIIVSAET…QFRAKDSYSL (141 aa). K(+) contacts are provided by Ser-787, Leu-818, Asp-820, Gly-842, and Asp-865. Disordered stretches follow at residues 1053-1081 and 1212-1239; these read REAK…ADPV and TSSS…ETQL. Positions 1213-1230 are enriched in low complexity; the sequence is SSSQSRKSSCSNKLSSCN.

Belongs to the potassium channel family. Calcium-activated (TC 1.A.1.3) subfamily. KCa4.1/KCNT1 sub-subfamily. As to quaternary structure, homotetramer; which constitutes the Na(+)-activated K(+) channel. Interacts with KCNT2; these heterodimer channels differ from the homomers in their unitary conductance, kinetic behavior, subcellular localization, and response to activation of protein kinase C. Interacts (via C-terminus) with FMR1; this interaction alters gating properties of KCNT1. Interacts with CRBN via its cytoplasmic C-terminus. In terms of assembly, does not interact with KCNT2. Phosphorylated by protein kinase C. Phosphorylation of the C-terminal domain increases channel activity. In terms of tissue distribution, detected in brain and brainstem, in vestibular and oculomotor nuclei, the medial nucleus of the trapezoid in the auditory system, in olfactory bulb, red nucleus, and deep cerebellar nuclei. Detected in thalamus, substantia nigra, and amygdala (at protein level). Highly expressed in the brain and kidney.

It is found in the cell membrane. It catalyses the reaction K(+)(in) = K(+)(out). Activated by high intracellular Na(+) level. In addition to activation by Na(+), is cooperatively activated by intracellular Cl(-) levels. Activated upon stimulation of G-protein coupled receptors, such as CHRM1 and GRIA1. Functionally, sodium-activated K(+) channel. Acts as an important mediator of neuronal membrane excitability. Contributes to the delayed outward currents. Regulates neuronal bursting in sensory neurons. Contributes to synaptic development and plasticity. The chain is Potassium channel subfamily T member 1 (Kcnt1) from Rattus norvegicus (Rat).